The primary structure comprises 325 residues: Lipoyl synthase (325 aa).

[4Fe-4S] cluster is bound by residues Cys72, Cys77, Cys83, Cys98, Cys102, Cys105, and Ser312. Residues 84–301 form the Radical SAM core domain; the sequence is FSSGTATFMI…AEEGMKMGFK (218 aa).

This sequence belongs to the radical SAM superfamily. Lipoyl synthase family. [4Fe-4S] cluster serves as cofactor.

It is found in the cytoplasm. It carries out the reaction [[Fe-S] cluster scaffold protein carrying a second [4Fe-4S](2+) cluster] + N(6)-octanoyl-L-lysyl-[protein] + 2 oxidized [2Fe-2S]-[ferredoxin] + 2 S-adenosyl-L-methionine + 4 H(+) = [[Fe-S] cluster scaffold protein] + N(6)-[(R)-dihydrolipoyl]-L-lysyl-[protein] + 4 Fe(3+) + 2 hydrogen sulfide + 2 5'-deoxyadenosine + 2 L-methionine + 2 reduced [2Fe-2S]-[ferredoxin]. Its pathway is protein modification; protein lipoylation via endogenous pathway; protein N(6)-(lipoyl)lysine from octanoyl-[acyl-carrier-protein]: step 2/2. Functionally, catalyzes the radical-mediated insertion of two sulfur atoms into the C-6 and C-8 positions of the octanoyl moiety bound to the lipoyl domains of lipoate-dependent enzymes, thereby converting the octanoylated domains into lipoylated derivatives. The sequence is that of Lipoyl synthase from Stutzerimonas stutzeri (strain A1501) (Pseudomonas stutzeri).